Here is a 132-residue protein sequence, read N- to C-terminus: Small ribosomal subunit protein uS8 (132 aa).

This sequence belongs to the universal ribosomal protein uS8 family. In terms of assembly, part of the 30S ribosomal subunit. Contacts proteins S5 and S12.

One of the primary rRNA binding proteins, it binds directly to 16S rRNA central domain where it helps coordinate assembly of the platform of the 30S subunit. The protein is Small ribosomal subunit protein uS8 of Brucella ovis (strain ATCC 25840 / 63/290 / NCTC 10512).